We begin with the raw amino-acid sequence, 626 residues long: Chaperone protein HtpG (626 aa).

An a; substrate-binding region spans residues 1 to 341 (MAKKEFKAES…SEDLSLNISR (341 aa)). The segment at 342-552 (EMLQHDRQLK…DGEVTIEMEK (211 aa)) is b. Residues 553–626 (ILNAMPDSQN…FTNNICKVMV (74 aa)) form a c region.

The protein belongs to the heat shock protein 90 family. In terms of assembly, homodimer.

The protein localises to the cytoplasm. In terms of biological role, molecular chaperone. Has ATPase activity. This is Chaperone protein HtpG from Bacillus subtilis (strain 168).